A 262-amino-acid chain; its full sequence is MSAHANHPFHLVDYSPWPLTGAIGAMTTVSGLVQWFHQYTMTLFILGNIITILTMYQWWRDISREGTFQGLHTFPVTIGLRWGMILFIVSEIFFFISFFWAFFHSSLSPTIELGMTWPPVGIIAFNPFQIPLLNTAILLASGVTVTWAHHALMESNHSQATQGLFFTIVLGIYFSILQAYEYIEAPFTIADAVYGSTFYMATGFHGLHVLIGTTFLLICFLRHINFHFSKNHHFGFEAAAWYWHFVDVVWLFLYISIYWWGS.

Helical transmembrane passes span 39–59 (YTMT…YQWW), 83–103 (GMIL…WAFF), 120–140 (VGII…ILLA), 163–183 (GLFF…YEYI), 201–221 (ATGF…ICFL), and 240–260 (AWYW…IYWW).

This sequence belongs to the cytochrome c oxidase subunit 3 family. As to quaternary structure, component of the cytochrome c oxidase (complex IV, CIV), a multisubunit enzyme composed of a catalytic core of 3 subunits and several supernumerary subunits. The complex exists as a monomer or a dimer and forms supercomplexes (SCs) in the inner mitochondrial membrane with ubiquinol-cytochrome c oxidoreductase (cytochrome b-c1 complex, complex III, CIII).

The protein resides in the mitochondrion inner membrane. The enzyme catalyses 4 Fe(II)-[cytochrome c] + O2 + 8 H(+)(in) = 4 Fe(III)-[cytochrome c] + 2 H2O + 4 H(+)(out). Component of the cytochrome c oxidase, the last enzyme in the mitochondrial electron transport chain which drives oxidative phosphorylation. The respiratory chain contains 3 multisubunit complexes succinate dehydrogenase (complex II, CII), ubiquinol-cytochrome c oxidoreductase (cytochrome b-c1 complex, complex III, CIII) and cytochrome c oxidase (complex IV, CIV), that cooperate to transfer electrons derived from NADH and succinate to molecular oxygen, creating an electrochemical gradient over the inner membrane that drives transmembrane transport and the ATP synthase. Cytochrome c oxidase is the component of the respiratory chain that catalyzes the reduction of oxygen to water. Electrons originating from reduced cytochrome c in the intermembrane space (IMS) are transferred via the dinuclear copper A center (CU(A)) of subunit 2 and heme A of subunit 1 to the active site in subunit 1, a binuclear center (BNC) formed by heme A3 and copper B (CU(B)). The BNC reduces molecular oxygen to 2 water molecules using 4 electrons from cytochrome c in the IMS and 4 protons from the mitochondrial matrix. The sequence is that of Cytochrome c oxidase subunit 3 (COIII) from Anopheles quadrimaculatus (Common malaria mosquito).